The following is a 512-amino-acid chain: Choline-sulfatase (512 aa).

Positions 14, 15, and 54 each coordinate Ca(2+). Cys-54 serves as the catalytic Nucleophile. The residue at position 54 (Cys-54) is a 3-oxoalanine (Cys). Residue His-104 is part of the active site. Positions 296 and 297 each coordinate Ca(2+).

Belongs to the sulfatase family. Requires Ca(2+) as cofactor. Post-translationally, the conversion to 3-oxoalanine (also known as C-formylglycine, FGly), of a serine or cysteine residue in prokaryotes and of a cysteine residue in eukaryotes, is critical for catalytic activity.

The enzyme catalyses choline sulfate + H2O = choline + sulfate + H(+). It functions in the pathway amine and polyamine biosynthesis; choline biosynthesis; choline from choline sulfate: step 1/1. Its function is as follows. Converts choline-O-sulfate into choline. This chain is Choline-sulfatase (betC), found in Rhizobium meliloti (strain 1021) (Ensifer meliloti).